We begin with the raw amino-acid sequence, 433 residues long: Probable M18 family aminopeptidase 2 (433 aa).

Histidine 84, histidine 161, and histidine 409 together coordinate Zn(2+).

It belongs to the peptidase M18 family. The cofactor is Zn(2+).

This Clostridium acetobutylicum (strain ATCC 824 / DSM 792 / JCM 1419 / IAM 19013 / LMG 5710 / NBRC 13948 / NRRL B-527 / VKM B-1787 / 2291 / W) protein is Probable M18 family aminopeptidase 2 (apeB).